A 228-amino-acid polypeptide reads, in one-letter code: Ribulose-phosphate 3-epimerase (228 aa).

Substrate is bound at residue Ser-9. Residues His-34, Asp-36, His-68, and Asp-177 each contribute to the a divalent metal cation site. Asp-36 functions as the Proton acceptor in the catalytic mechanism. Residues His-68, Asp-177–Gly-179, and Gly-199–Ser-200 each bind substrate. Residue Asp-177 is the Proton donor of the active site.

It belongs to the ribulose-phosphate 3-epimerase family. The cofactor is a divalent metal cation.

It catalyses the reaction D-ribulose 5-phosphate = D-xylulose 5-phosphate. It functions in the pathway carbohydrate degradation. Catalyzes the reversible epimerization of D-ribulose 5-phosphate to D-xylulose 5-phosphate. The chain is Ribulose-phosphate 3-epimerase from Buchnera aphidicola subsp. Schizaphis graminum (strain Sg).